We begin with the raw amino-acid sequence, 60 residues long: DNA gyrase inhibitor YacG (60 aa).

Zn(2+)-binding residues include Cys-3, Cys-6, Cys-18, and Cys-22. Residues Pro-38 to His-60 form a disordered region. The span at Ser-41–Ala-52 shows a compositional bias: acidic residues.

It belongs to the DNA gyrase inhibitor YacG family. In terms of assembly, interacts with GyrB. Zn(2+) is required as a cofactor.

Inhibits all the catalytic activities of DNA gyrase by preventing its interaction with DNA. Acts by binding directly to the C-terminal domain of GyrB, which probably disrupts DNA binding by the gyrase. The protein is DNA gyrase inhibitor YacG of Ruegeria pomeroyi (strain ATCC 700808 / DSM 15171 / DSS-3) (Silicibacter pomeroyi).